The sequence spans 411 residues: Arginine deiminase (411 aa).

The active-site Amidino-cysteine intermediate is the Cys399.

The protein belongs to the arginine deiminase family.

The protein localises to the cytoplasm. The catalysed reaction is L-arginine + H2O = L-citrulline + NH4(+). The protein operates within amino-acid degradation; L-arginine degradation via ADI pathway; carbamoyl phosphate from L-arginine: step 1/2. The polypeptide is Arginine deiminase (Latilactobacillus sakei subsp. sakei (strain 23K) (Lactobacillus sakei subsp. sakei)).